Here is a 219-residue protein sequence, read N- to C-terminus: Probable GTP-binding protein EngB (219 aa).

Residues 26-200 enclose the EngB-type G domain; the sequence is EGVEIAFAGR…RAKLDTWFAP (175 aa). Residues 34-41, 61-65, 79-82, 146-149, and 179-181 each bind GTP; these read GRSNAGKS, GRTQL, DLPG, TKAD, and FSS. The Mg(2+) site is built by serine 41 and threonine 63.

It belongs to the TRAFAC class TrmE-Era-EngA-EngB-Septin-like GTPase superfamily. EngB GTPase family. Requires Mg(2+) as cofactor.

In terms of biological role, necessary for normal cell division and for the maintenance of normal septation. This is Probable GTP-binding protein EngB from Vibrio parahaemolyticus serotype O3:K6 (strain RIMD 2210633).